Here is a 261-residue protein sequence, read N- to C-terminus: uncharacterized protein (261 aa).

The next 5 helical transmembrane spans lie at 38–58, 134–154, 163–183, 195–215, and 219–239; these read FIYL…ITLL, YTLM…LALI, ILIN…TYVL, YMGL…LFFL, and HKSV…CLKV.

The protein localises to the membrane. This is an uncharacterized protein from Dictyostelium discoideum (Social amoeba).